Reading from the N-terminus, the 105-residue chain is Circadian clock oscillator protein KaiB (105 aa).

The protein belongs to the KaiB family. The KaiABC complex composition changes during the circadian cycle to control KaiC phosphorylation. Complexes KaiC(6), KaiA(2-4):KaiC(6), KaiB(6):KaiC(6) and KaiC(6):KaiB(6):KaiA(12) are among the most important forms, many form cooperatively. Undergoes a major conformational rearrangment; in the free state forms homotetramers as a dimer of dimers. When bound to the CI domain of KaiC switches to a monomeric thioredoxin-fold (KaiB(fs)). KaiB(fs) binds CikA, leading it to dephosphorylate phospho-RpaA.

In terms of biological role, key component of the KaiABC oscillator complex, which constitutes the main circadian regulator in cyanobacteria. Complex composition changes during the circadian cycle to control KaiC phosphorylation. KaiA stimulates KaiC autophosphorylation, while KaiB sequesters KaiA, leading to KaiC autodephosphorylation. Phospho-Ser-431 KaiC accumulation triggers binding of KaiB to form the KaiB(6):KaiC(6) complex, leading to changes in output regulators CikA and SasA. KaiB switches to a thioredoxin-like fold (KaiB(fs)) when bound to KaiC. KaiB(6):KaiC(6) formation exposes a site for KaiA binding that sequesters KaiA from KaiC, making the KaiC(6):KaiB(6):KaiA(12) complex that results in KaiC autodephosphorylation. A metamorphic protein which reversibly switches between an inactive tetrameric fold and a rare, thioredoxin-like monomeric fold (KaiB(fs)). KaiB(fs) binds phospho-KaiC, KaiA and CikA. KaiA and CikA compete for binding to KaiB(fs), and KaiB(fs) and SasA compete for binding to KaiC, thus the clock oscillator and output signal pathway are tightly coupled. This Cyanothece sp. (strain PCC 7425 / ATCC 29141) protein is Circadian clock oscillator protein KaiB.